The sequence spans 555 residues: Dihydroxy-acid dehydratase (555 aa).

Residue D78 coordinates Mg(2+). C119 serves as a coordination point for [2Fe-2S] cluster. Residues D120 and K121 each contribute to the Mg(2+) site. Position 121 is an N6-carboxylysine (K121). C191 serves as a coordination point for [2Fe-2S] cluster. E444 is a Mg(2+) binding site. The active-site Proton acceptor is the S470.

Belongs to the IlvD/Edd family. Homodimer. Requires [2Fe-2S] cluster as cofactor. It depends on Mg(2+) as a cofactor.

It catalyses the reaction (2R)-2,3-dihydroxy-3-methylbutanoate = 3-methyl-2-oxobutanoate + H2O. The enzyme catalyses (2R,3R)-2,3-dihydroxy-3-methylpentanoate = (S)-3-methyl-2-oxopentanoate + H2O. It functions in the pathway amino-acid biosynthesis; L-isoleucine biosynthesis; L-isoleucine from 2-oxobutanoate: step 3/4. Its pathway is amino-acid biosynthesis; L-valine biosynthesis; L-valine from pyruvate: step 3/4. Functionally, functions in the biosynthesis of branched-chain amino acids. Catalyzes the dehydration of (2R,3R)-2,3-dihydroxy-3-methylpentanoate (2,3-dihydroxy-3-methylvalerate) into 2-oxo-3-methylpentanoate (2-oxo-3-methylvalerate) and of (2R)-2,3-dihydroxy-3-methylbutanoate (2,3-dihydroxyisovalerate) into 2-oxo-3-methylbutanoate (2-oxoisovalerate), the penultimate precursor to L-isoleucine and L-valine, respectively. This is Dihydroxy-acid dehydratase from Maridesulfovibrio salexigens (strain ATCC 14822 / DSM 2638 / NCIMB 8403 / VKM B-1763) (Desulfovibrio salexigens).